Reading from the N-terminus, the 342-residue chain is MEPHDSSHMDSEFRYTLFPIVYSIIFVLGVIANGYVLWVFARLYPCKKFNEIKIFMVNLTMADMLFLITLPLWIVYYQNQGNWILPKFLCNVAGCLFFINTYCSVAFLGVITYNRFQAVTRPIKTAQANTRKRGISLSLVIWVAIVGAASYFLILDSTNTVPDSAGSGNVTRCFEHYEKGSVPVLIIHIFIVFSFFLVFLIILFCNLVIIRTLLMQPVQQQRNAEVKRRALWMVCTVLAVFIICFVPHHVVQLPWTLAELGFQDSKFHQAINDAHQVTLCLLSTNCVLDPVIYCFLTKKFRKHLTEKFYSMRSSRKCSRATTDTVTEVVVPFNQIPGNSLKN.

Residues 1-16 (MEPHDSSHMDSEFRYT) are Extracellular-facing. Residues 17–38 (LFPIVYSIIFVLGVIANGYVLW) form a helical membrane-spanning segment. Topologically, residues 39–54 (VFARLYPCKKFNEIKI) are cytoplasmic. Residues 55 to 74 (FMVNLTMADMLFLITLPLWI) traverse the membrane as a helical segment. The Extracellular segment spans residues 75–91 (VYYQNQGNWILPKFLCN). A disulfide bridge links Cys-90 with Cys-173. Residues 92 to 113 (VAGCLFFINTYCSVAFLGVITY) traverse the membrane as a helical segment. Over 114–133 (NRFQAVTRPIKTAQANTRKR) the chain is Cytoplasmic. A helical transmembrane segment spans residues 134-155 (GISLSLVIWVAIVGAASYFLIL). Topologically, residues 156–184 (DSTNTVPDSAGSGNVTRCFEHYEKGSVPV) are extracellular. An N-linked (GlcNAc...) asparagine glycan is attached at Asn-169. A helical transmembrane segment spans residues 185–205 (LIIHIFIVFSFFLVFLIILFC). The Cytoplasmic segment spans residues 206–233 (NLVIIRTLLMQPVQQQRNAEVKRRALWM). A helical transmembrane segment spans residues 234–254 (VCTVLAVFIICFVPHHVVQLP). The Extracellular segment spans residues 255–276 (WTLAELGFQDSKFHQAINDAHQ). The chain crosses the membrane as a helical span at residues 277–296 (VTLCLLSTNCVLDPVIYCFL). At 297–342 (TKKFRKHLTEKFYSMRSSRKCSRATTDTVTEVVVPFNQIPGNSLKN) the chain is on the cytoplasmic side.

This sequence belongs to the G-protein coupled receptor 1 family. As to quaternary structure, interacts with ARRB1. Expressed in the placenta, lung, left and right heart ventricles, heart atrium, leukocytes and differentiated HL-60 granulocytes.

It is found in the cell membrane. Its function is as follows. Receptor for platelet activating factor, a chemotactic phospholipid mediator that possesses potent inflammatory, smooth-muscle contractile and hypotensive activity. Seems to mediate its action via a G protein that activates a phosphatidylinositol-calcium second messenger system. The sequence is that of Platelet-activating factor receptor (PTAFR) from Homo sapiens (Human).